Consider the following 82-residue polypeptide: ATP synthase subunit c, chloroplastic (82 aa).

2 helical membrane passes run 7–27 and 57–77; these read AASVVASGLSVGLAAIGPGIG and LAFMESLTIYGLVVALALLFA.

It belongs to the ATPase C chain family. F-type ATPases have 2 components, F(1) - the catalytic core - and F(0) - the membrane proton channel. F(1) has five subunits: alpha(3), beta(3), gamma(1), delta(1), epsilon(1). F(0) has four main subunits: a(1), b(1), b'(1) and c(10-14). The alpha and beta chains form an alternating ring which encloses part of the gamma chain. F(1) is attached to F(0) by a central stalk formed by the gamma and epsilon chains, while a peripheral stalk is formed by the delta, b and b' chains.

It localises to the plastid. It is found in the chloroplast thylakoid membrane. Its function is as follows. F(1)F(0) ATP synthase produces ATP from ADP in the presence of a proton or sodium gradient. F-type ATPases consist of two structural domains, F(1) containing the extramembraneous catalytic core and F(0) containing the membrane proton channel, linked together by a central stalk and a peripheral stalk. During catalysis, ATP synthesis in the catalytic domain of F(1) is coupled via a rotary mechanism of the central stalk subunits to proton translocation. Key component of the F(0) channel; it plays a direct role in translocation across the membrane. A homomeric c-ring of between 10-14 subunits forms the central stalk rotor element with the F(1) delta and epsilon subunits. The polypeptide is ATP synthase subunit c, chloroplastic (Rhodomonas salina (Cryptomonas salina)).